A 538-amino-acid chain; its full sequence is Cytosolic Fe-S cluster assembly factor NAR1 homolog (538 aa).

Residues C19, C64, C67, C70, C218, C273, C453, and C457 each contribute to the [4Fe-4S] cluster site.

This sequence belongs to the NARF family.

Its subcellular location is the cytoplasm. The protein resides in the nucleus. Functionally, component of the cytosolic Fe/S protein assembly machinery. Required for maturation of extramitochondrial Fe/S proteins. May play a role in the transfer of pre-assembled Fe/S clusters to target apoproteins. The protein is Cytosolic Fe-S cluster assembly factor NAR1 homolog of Schizosaccharomyces pombe (strain 972 / ATCC 24843) (Fission yeast).